Reading from the N-terminus, the 445-residue chain is Phosphoglucosamine mutase (445 aa).

The active-site Phosphoserine intermediate is Ser-102. Residues Ser-102, Asp-241, Asp-243, and Asp-245 each coordinate Mg(2+). Ser-102 is modified (phosphoserine).

It belongs to the phosphohexose mutase family. Requires Mg(2+) as cofactor. Post-translationally, activated by phosphorylation.

It catalyses the reaction alpha-D-glucosamine 1-phosphate = D-glucosamine 6-phosphate. Catalyzes the conversion of glucosamine-6-phosphate to glucosamine-1-phosphate. This Pectobacterium atrosepticum (strain SCRI 1043 / ATCC BAA-672) (Erwinia carotovora subsp. atroseptica) protein is Phosphoglucosamine mutase.